The sequence spans 347 residues: F-box protein At2g14500 (347 aa).

The F-box domain occupies 6-52 (PLTLSELPHDLLRNIFNRLSFADFHRATWNSISKQTAPPKTKSPWLI).

The sequence is that of F-box protein At2g14500 from Arabidopsis thaliana (Mouse-ear cress).